Reading from the N-terminus, the 316-residue chain is Phosphoglycerate mutase-like protein AT74 (316 aa).

The active-site Tele-phosphohistidine intermediate is the His17. The active-site Proton donor/acceptor is Glu106. The segment at 275 to 316 is disordered; that stretch reads KECETEATEDREEEEEEEGKRVNLLTSSEYSNEPELYNGQCC. Over residues 279–291 the composition is skewed to acidic residues; that stretch reads TEATEDREEEEEE.

The protein belongs to the phosphoglycerate mutase family. As to expression, expressed in roots, leaves, stems, flowers and siliques.

Phosphoglycerate mutase-like protein lacking PGM activity. May play a role in carbohydrates metabolism. This chain is Phosphoglycerate mutase-like protein AT74, found in Arabidopsis thaliana (Mouse-ear cress).